The following is a 217-amino-acid chain: Large ribosomal subunit protein bL25 (217 aa).

The protein belongs to the bacterial ribosomal protein bL25 family. CTC subfamily. In terms of assembly, part of the 50S ribosomal subunit; part of the 5S rRNA/L5/L18/L25 subcomplex. Contacts the 5S rRNA. Binds to the 5S rRNA independently of L5 and L18.

This is one of the proteins that binds to the 5S RNA in the ribosome where it forms part of the central protuberance. This chain is Large ribosomal subunit protein bL25, found in Methylobacterium sp. (strain 4-46).